Reading from the N-terminus, the 232-residue chain is Octanoyltransferase (232 aa).

The 176-residue stretch at 44–219 (EHTADEVWVV…QLARQFGLVL (176 aa)) folds into the BPL/LPL catalytic domain. Residues 83 to 90 (RGGQVTYH), 150 to 152 (ALG), and 163 to 165 (GLS) contribute to the substrate site. Cysteine 181 (acyl-thioester intermediate) is an active-site residue.

It belongs to the LipB family.

The protein resides in the cytoplasm. It catalyses the reaction octanoyl-[ACP] + L-lysyl-[protein] = N(6)-octanoyl-L-lysyl-[protein] + holo-[ACP] + H(+). It functions in the pathway protein modification; protein lipoylation via endogenous pathway; protein N(6)-(lipoyl)lysine from octanoyl-[acyl-carrier-protein]: step 1/2. Catalyzes the transfer of endogenously produced octanoic acid from octanoyl-acyl-carrier-protein onto the lipoyl domains of lipoate-dependent enzymes. Lipoyl-ACP can also act as a substrate although octanoyl-ACP is likely to be the physiological substrate. The polypeptide is Octanoyltransferase (Xanthomonas euvesicatoria pv. vesicatoria (strain 85-10) (Xanthomonas campestris pv. vesicatoria)).